Consider the following 453-residue polypeptide: uncharacterized protein (453 aa).

2 disordered regions span residues 15 to 42 (LKRKQPSTSFNGKRKRTSSGLIEKSETM) and 425 to 453 (TNEISSSNNSGTAKNKNNQNRKRNRRHAK). A compositionally biased stretch (polar residues) spans 425–437 (TNEISSSNNSGTA). The segment covering 443–453 (QNRKRNRRHAK) has biased composition (basic residues).

This is an uncharacterized protein from Caenorhabditis elegans.